Consider the following 429-residue polypeptide: MKRVLGIILGGGAGTRLYPLTKLRAKPAVPLAGKYRLIDIPVSNCINSEIHKIYILTQFNSASLNRHISRTYNFTGFTEGFTEVLAAQQTKENPDWFQGTADAVRQYSWLLEDWDVDEYIILSGDHLYRMDYREFIQRHRDTGADITLSVVPVGEKVAPAFGLMKIDANGRVVDFSEKPTGEALKAMQVDTQSLGLDPEQAKEKPYIASMGIYVFKKQVLLDLLKEGKDKTDFGKEIIPDAAKDYNVQAYLFDDYWADIGTIEAFYEANLGLTKQPIPPFSFYDEKAPIYTRARYLPPTKVLNADVTESMISEGCIIKNCRIHHSVLGIRTRVEADCTIEDTMIMGADYYQPYEKRQDCLRRGKPPIGIGEGTTIRRAIIDKNARIGKNVMIVNKENVEESNREELGYYIRSGITVVLKNAVIPDGTVI.

Residues G162, 177 to 178 (EK), and S209 each bind alpha-D-glucose 1-phosphate.

It belongs to the bacterial/plant glucose-1-phosphate adenylyltransferase family. Homotetramer.

It catalyses the reaction alpha-D-glucose 1-phosphate + ATP + H(+) = ADP-alpha-D-glucose + diphosphate. It functions in the pathway glycan biosynthesis; glycogen biosynthesis. Involved in the biosynthesis of ADP-glucose, a building block required for the elongation reactions to produce glycogen. Catalyzes the reaction between ATP and alpha-D-glucose 1-phosphate (G1P) to produce pyrophosphate and ADP-Glc. This chain is Glucose-1-phosphate adenylyltransferase, found in Picosynechococcus sp. (strain ATCC 27264 / PCC 7002 / PR-6) (Agmenellum quadruplicatum).